The chain runs to 482 residues: Putative transposase R186 (482 aa).

Cys416, Cys419, Cys433, and Cys435 together coordinate Zn(2+).

In the central section; belongs to the transposase 2 family. The protein in the C-terminal section; belongs to the transposase 35 family.

This Acanthamoeba polyphaga (Amoeba) protein is Putative transposase R186.